Here is a 122-residue protein sequence, read N- to C-terminus: MIQQESRLKVADNSGARELLTIKVLGGSGRKTANIGDIIVATVKQATPGGVVKKGDVVRAVVVRTKRGARRKDGSYIRFDENAAVIIKDDKSPRGTRIFGPVARELREKEFMKIVSLAPEVL.

The protein belongs to the universal ribosomal protein uL14 family. As to quaternary structure, part of the 50S ribosomal subunit. Forms a cluster with proteins L3 and L19. In the 70S ribosome, L14 and L19 interact and together make contacts with the 16S rRNA in bridges B5 and B8.

In terms of biological role, binds to 23S rRNA. Forms part of two intersubunit bridges in the 70S ribosome. In Exiguobacterium sp. (strain ATCC BAA-1283 / AT1b), this protein is Large ribosomal subunit protein uL14.